The primary structure comprises 242 residues: Host range factor p28 (242 aa).

One can recognise a KilA-N domain in the interval 21-131 (YIDEPNDIRL…QSILRGLVNW (111 aa)). The RING-type zinc-finger motif lies at 173 to 226 (CGICYEVVYSKRLENDRYFGLLDSCNHIFCITCINIWHRTRRETGASDNCPICR).

This sequence belongs to the orthopoxvirus OPG021 family.

The protein localises to the host cytoplasm. The enzyme catalyses S-ubiquitinyl-[E2 ubiquitin-conjugating enzyme]-L-cysteine + [acceptor protein]-L-lysine = [E2 ubiquitin-conjugating enzyme]-L-cysteine + N(6)-ubiquitinyl-[acceptor protein]-L-lysine.. Its function is as follows. RING-finger E3 ubiquitin ligase which catalyzes the formation of both 'Lys-48'- and 'Lys-63'-linked polyubiquitin chains. Plays an important role in virulence by acting as an anti-apoptotic factor. This Cowpox virus (strain Brighton Red) (CPV) protein is Host range factor p28 (OPG021).